The sequence spans 627 residues: Pescadillo homolog (627 aa).

A BRCT domain is found at 321–414; that stretch reads RLRTLFKGLK…QLLPTNKYFI (94 aa). 3 disordered regions span residues 450-469, 488-566, and 595-627; these read HAQSDDDSEDEAQEEEETVD, YKKY…MVKP, and TIEASEKEARKTAKREARKEAAAAAAKASKLGK. Residues S453 and S457 each carry the phosphoserine modification. 2 stretches are compositionally biased toward acidic residues: residues 454 to 469 and 497 to 521; these read DDDSEDEAQEEEETVD and VNEDEEDPEDEDDNEDDDEEEEELD. Positions 522-533 are enriched in basic and acidic residues; sequence EKTKRLQEEKQK. Residues 540-549 show a composition bias toward basic residues; sequence KVHKVNKRQV. Basic and acidic residues-rich tracts occupy residues 550-559 and 595-615; these read HKAEVDEHRL and TIEASEKEARKTAKREARKEA. Positions 582-625 form a coiled coil; it reads KEKEEWLLRKKRRTIEASEKEARKTAKREARKEAAAAAAKASKL. Over residues 616–627 the composition is skewed to low complexity; sequence AAAAAKASKLGK.

This sequence belongs to the pescadillo family.

The protein localises to the nucleus. It is found in the nucleolus. It localises to the nucleoplasm. Its function is as follows. Required for maturation of ribosomal RNAs and formation of the large ribosomal subunit. The chain is Pescadillo homolog from Drosophila simulans (Fruit fly).